The chain runs to 1470 residues: Guanine nucleotide exchange factor subunit R06F6.8 (1470 aa).

3 WD repeats span residues 20 to 58, 68 to 107, and 472 to 512; these read STAA…LLCS, ETRG…DEQC, and AYCS…VVGV. Disordered regions lie at residues 673 to 710, 975 to 1001, 1017 to 1045, and 1238 to 1259; these read QSQN…PMNQ, FFRT…ADSS, RLNK…SKDK, and RSPS…SPSS. Positions 689–707 are enriched in low complexity; the sequence is SNVSIQSVSTSTTSEPSSP. Positions 983-1001 are enriched in polar residues; the sequence is AKTSLSRRPTVSSPSADSS. A compositionally biased stretch (basic and acidic residues) spans 1028–1045; the sequence is EQKDAPRKDSIGGSSKDK. Residues 1294-1314 form a helical membrane-spanning segment; sequence LLLSLFSQTATIDWIFLFCLL. The span at 1385-1403 shows a compositional bias: basic and acidic residues; the sequence is SPDNENRKASQKTSADDPK. The tract at residues 1385–1447 is disordered; the sequence is SPDNENRKAS…SADRAHKSVK (63 aa). Residues 1411–1424 are compositionally biased toward polar residues; it reads SGSSKLNNSFSNPK. Residues 1431 to 1447 are compositionally biased toward basic and acidic residues; sequence GRRERSRSADRAHKSVK.

It belongs to the RIC1 family. In terms of assembly, component of a guanine nucleotide exchange factor (GEF) complex.

The protein localises to the membrane. Functionally, probable component of a guanine nucleotide exchange factor (GEF) that may be required for efficient fusion of endosome-derived vesicles with the Golgi. The polypeptide is Guanine nucleotide exchange factor subunit R06F6.8 (Caenorhabditis elegans).